Here is a 196-residue protein sequence, read N- to C-terminus: N-(5'-phosphoribosyl)anthranilate isomerase (196 aa).

The protein belongs to the TrpF family.

It catalyses the reaction N-(5-phospho-beta-D-ribosyl)anthranilate = 1-(2-carboxyphenylamino)-1-deoxy-D-ribulose 5-phosphate. It participates in amino-acid biosynthesis; L-tryptophan biosynthesis; L-tryptophan from chorismate: step 3/5. This chain is N-(5'-phosphoribosyl)anthranilate isomerase, found in Sulfurovum sp. (strain NBC37-1).